Consider the following 295-residue polypeptide: Phosphatidylserine decarboxylase proenzyme (295 aa).

Residues Asp-113, His-169, and Ser-256 each act as charge relay system; for autoendoproteolytic cleavage activity in the active site. Ser-256 acts as the Schiff-base intermediate with substrate; via pyruvic acid; for decarboxylase activity in catalysis. Ser-256 bears the Pyruvic acid (Ser); by autocatalysis mark.

The protein belongs to the phosphatidylserine decarboxylase family. PSD-B subfamily. Prokaryotic type II sub-subfamily. Heterodimer of a large membrane-associated beta subunit and a small pyruvoyl-containing alpha subunit. Pyruvate serves as cofactor. Post-translationally, is synthesized initially as an inactive proenzyme. Formation of the active enzyme involves a self-maturation process in which the active site pyruvoyl group is generated from an internal serine residue via an autocatalytic post-translational modification. Two non-identical subunits are generated from the proenzyme in this reaction, and the pyruvate is formed at the N-terminus of the alpha chain, which is derived from the carboxyl end of the proenzyme. The autoendoproteolytic cleavage occurs by a canonical serine protease mechanism, in which the side chain hydroxyl group of the serine supplies its oxygen atom to form the C-terminus of the beta chain, while the remainder of the serine residue undergoes an oxidative deamination to produce ammonia and the pyruvoyl prosthetic group on the alpha chain. During this reaction, the Ser that is part of the protease active site of the proenzyme becomes the pyruvoyl prosthetic group, which constitutes an essential element of the active site of the mature decarboxylase.

Its subcellular location is the cell membrane. It catalyses the reaction a 1,2-diacyl-sn-glycero-3-phospho-L-serine + H(+) = a 1,2-diacyl-sn-glycero-3-phosphoethanolamine + CO2. Its pathway is phospholipid metabolism; phosphatidylethanolamine biosynthesis; phosphatidylethanolamine from CDP-diacylglycerol: step 2/2. Its function is as follows. Catalyzes the formation of phosphatidylethanolamine (PtdEtn) from phosphatidylserine (PtdSer). The chain is Phosphatidylserine decarboxylase proenzyme from Clostridium novyi (strain NT).